Here is a 478-residue protein sequence, read N- to C-terminus: MFKFHQMKHIFEILDKMRCLRKRSTVSFLGVLVIFLLFMNLYIEDSYVLEGDKQLIRETSTHQLNSERYVHTFKDLSNFSGAINVTYRYLAATPLQRKRYLTIGLSSVKRKKGNYLLETIKSIFEQSSYEELKEISVVVHLADFNSSWRDAMVQDITQKFAHHIIAGRLMVIHAPEEYYPILDGLKRNYNDPEDRVKFRSKQNVDYAFLLNFCANTSDYYVMLEDDVRCSKNFLTAIKKVIASLEGTYWVTLEFSKLGYIGKLYHSHDLPRLAHFLLMFYQEMPCDWLLTHFRGLLAQKNVIRFKPSLFQHMGYYSSYKGTENKLKDDDFEEESFDIPDNPPASLYTNMNVFENYEASKAYSSVDEYFWGKPPSTGDVFVIVFENPIIIKKIKVNTGTEDRQNDILHHGALDVGENVMPSKRRRQCSTYLRLGEFKNGNFEMSGVNQKIPFDIHCMRIYVTKTQKEWLIIRSISIWTS.

Over 1–23 the chain is Cytoplasmic; sequence MFKFHQMKHIFEILDKMRCLRKR. Residues 24–44 traverse the membrane as a helical; Signal-anchor for type II membrane protein segment; the sequence is STVSFLGVLVIFLLFMNLYIE. Over 45 to 478 the chain is Lumenal; sequence DSYVLEGDKQ…IIRSISIWTS (434 aa). N-linked (GlcNAc...) asparagine glycosylation is found at Asn-84 and Asn-215.

This sequence belongs to the glycosyltransferase 54 family. A divalent metal cation is required as a cofactor.

It is found in the golgi apparatus membrane. The enzyme catalyses N(4)-{beta-D-GlcNAc-(1-&gt;2)-alpha-D-Man-(1-&gt;3)-[beta-D-GlcNAc-(1-&gt;2)-alpha-D-Man-(1-&gt;6)]-beta-D-Man-(1-&gt;4)-beta-D-GlcNAc-(1-&gt;4)-beta-D-GlcNAc}-L-asparaginyl-[protein] + UDP-N-acetyl-alpha-D-glucosamine = N(4)-{beta-D-GlcNAc-(1-&gt;2)-[beta-D-GlcNAc-(1-&gt;4)]-alpha-D-Man-(1-&gt;3)-[beta-D-GlcNAc-(1-&gt;2)-alpha-D-Man-(1-&gt;6)]-beta-D-Man-(1-&gt;4)-beta-D-GlcNAc-(1-&gt;4)-beta-D-GlcNAc}-L-asparaginyl-[protein] + UDP + H(+). It functions in the pathway protein modification; protein glycosylation. Its function is as follows. Glycosyltransferase that participates in the transfer of N-acetylglucosamine (GlcNAc) to the core mannose residues of N-linked glycans. Catalyzes the formation of the GlcNAcbeta1-4 branch on the GlcNAcbeta1-2Manalpha1-3 arm of the core structure of N-linked glycans. Essential for the production of tri- and tetra-antennary N-linked sugar chains. Does not catalyze the transfer of GlcNAc to the Manalpha1-6 arm to form GlcNAcBeta1-4Manalpha1-6 linkage ('GnT-VI' activity). The protein is Alpha-1,3-mannosyl-glycoprotein 4-beta-N-acetylglucosaminyltransferase C (MGAT4C) of Macaca fascicularis (Crab-eating macaque).